Reading from the N-terminus, the 242-residue chain is Anti-Pycsar protein Apyc1 (242 aa).

The interval 17–216 (FNNNALIEQD…EMQSIIKLMH (200 aa)) is beta-lactamase-like. Residues His59, His61, Asp63, His64, His142, Asp162, and His216 each contribute to the Zn(2+) site.

It belongs to the anti-Pycsar protein Apyc1 family. In terms of assembly, homodimer. It depends on Zn(2+) as a cofactor.

It carries out the reaction 3',5'-cyclic CMP + H2O = CMP + H(+). The enzyme catalyses 3',5'-cyclic UMP + H2O = UMP + H(+). Counteracts the endogenous Pycsar antiviral defense system. Phosphodiesterase that enables metal-dependent hydrolysis of host cyclic nucleotide Pycsar defense signals such as cCMP and cUMP. The chain is Anti-Pycsar protein Apyc1 from Saccharibacillus brassicae.